Consider the following 167-residue polypeptide: NADH-quinone oxidoreductase subunit I 1 (167 aa).

4Fe-4S ferredoxin-type domains follow at residues 58 to 88 (LRRYPNGEERCIACKLCEAVCPAQAITIDAE) and 98 to 127 (TRYDIDMTKCIYCGFCQEACPVDAIVEGPN). Residues C68, C71, C74, C78, C107, C110, C113, and C117 each contribute to the [4Fe-4S] cluster site.

This sequence belongs to the complex I 23 kDa subunit family. In terms of assembly, NDH-1 is composed of 14 different subunits. Subunits NuoA, H, J, K, L, M, N constitute the membrane sector of the complex. [4Fe-4S] cluster is required as a cofactor.

The protein localises to the cell inner membrane. It catalyses the reaction a quinone + NADH + 5 H(+)(in) = a quinol + NAD(+) + 4 H(+)(out). NDH-1 shuttles electrons from NADH, via FMN and iron-sulfur (Fe-S) centers, to quinones in the respiratory chain. The immediate electron acceptor for the enzyme in this species is believed to be ubiquinone. Couples the redox reaction to proton translocation (for every two electrons transferred, four hydrogen ions are translocated across the cytoplasmic membrane), and thus conserves the redox energy in a proton gradient. The chain is NADH-quinone oxidoreductase subunit I 1 from Cereibacter sphaeroides (strain ATCC 17029 / ATH 2.4.9) (Rhodobacter sphaeroides).